Here is a 156-residue protein sequence, read N- to C-terminus: Small ribosomal subunit protein uS7 (156 aa).

Belongs to the universal ribosomal protein uS7 family. In terms of assembly, part of the 30S ribosomal subunit. Contacts proteins S9 and S11.

One of the primary rRNA binding proteins, it binds directly to 16S rRNA where it nucleates assembly of the head domain of the 30S subunit. Is located at the subunit interface close to the decoding center, probably blocks exit of the E-site tRNA. The polypeptide is Small ribosomal subunit protein uS7 (Moorella thermoacetica (strain ATCC 39073 / JCM 9320)).